Consider the following 281-residue polypeptide: 32 kDa heat shock protein (281 aa).

Residues 142–168 are compositionally biased toward acidic residues; it reads EDDEEIDSDEEFGDSDQDEEDSDDEEI. A disordered region spans residues 142-281; the sequence is EDDEEIDSDE…NENNKKKQKN (140 aa). The segment covering 180–209 has biased composition (basic and acidic residues); it reads KITEISEVPESKKEKTPEPKKVPEPKKEQV. A compositionally biased stretch (low complexity) spans 210–273; the sequence is KQPTQPQQKK…NNKRPQNQNE (64 aa).

The chain is 32 kDa heat shock protein (hspC) from Dictyostelium discoideum (Social amoeba).